Reading from the N-terminus, the 317-residue chain is Zinc finger protein 771 (317 aa).

The span at 1 to 17 shows a compositional bias: acidic residues; that stretch reads MPGEQQAEEEEEEEMQE. Residues 1–63 are disordered; sequence MPGEQQAEEE…APSADPARPH (63 aa). Residue Lys-33 forms a Glycyl lysine isopeptide (Lys-Gly) (interchain with G-Cter in SUMO2) linkage. Positions 33 to 49 are enriched in basic and acidic residues; the sequence is KYEVVKLKIPMDNKEVP. 8 C2H2-type zinc fingers span residues 63 to 85, 91 to 113, 119 to 141, 147 to 169, 175 to 197, 203 to 225, 231 to 253, and 259 to 281; these read HACP…ARTH, FGCT…GRTH, YECP…RRRH, YACA…LRVH, YACP…RRTH, YACA…RRVH, HRCA…ARTH, and YPCA…RRAH.

This sequence belongs to the krueppel C2H2-type zinc-finger protein family.

The protein resides in the nucleus. Its function is as follows. May be involved in transcriptional regulation. The chain is Zinc finger protein 771 (ZNF771) from Homo sapiens (Human).